Consider the following 165-residue polypeptide: uncharacterized protein (165 aa).

5 consecutive transmembrane segments (helical) span residues Gly30–Gly50, Gly65–Leu85, Ser86–Gly106, Phe108–Gly128, and Trp131–Gly151.

This sequence to E.coli YcdZ.

It localises to the cell membrane. This is an uncharacterized protein from Escherichia coli (strain K12).